The following is a 476-amino-acid chain: Amino acid permease 3 (476 aa).

The Cytoplasmic portion of the chain corresponds to 1-33 (MVQNHQTVLAVDMPQTGGSKYLDDDGKNKRTGS). The helical transmembrane segment at 34 to 54 (VWTASAHIITAVIGSGVLSLA) threads the bilayer. At 55-57 (WAT) the chain is on the extracellular side. The chain crosses the membrane as a helical span at residues 58–78 (AQLGWLAGPVVMLLFSAVTYF). Over 79-122 (TSSLLAACYRSGDPISGKRNYTYMDAVRSNLGGVKVTLCGIVQY) the chain is Cytoplasmic. A helical membrane pass occupies residues 123-143 (LNIFGVAIGYTIASAISMMAI). Over 144–166 (KRSNCFHKSGGKDPCHMNSNPYM) the chain is Extracellular. 2 consecutive transmembrane segments (helical) span residues 167–187 (IAFG…QLWW) and 188–208 (LSIL…ALGI). Topologically, residues 209-277 (AQVVVNGKVK…EEKTMKKATL (69 aa)) are extracellular. A helical membrane pass occupies residues 278–298 (VSVSVTTMFYMLCGCMGYAAF). Over 299–300 (GD) the chain is Cytoplasmic. Residues 301–321 (LSPGNLLTGFGFYNPYWLLDI) traverse the membrane as a helical segment. The Extracellular segment spans residues 322–324 (ANA). A helical transmembrane segment spans residues 325-345 (AIVIHLIGAYQVYCQPLFAFI). At 346–384 (EKQASIQFPDSEFIAKDIKIPIPGFKPLRLNVFRLIWRT) the chain is on the cytoplasmic side. 2 helical membrane passes run 385–405 (VFVI…DVVG) and 406–426 (LLGA…MYIA). The Cytoplasmic segment spans residues 427–441 (QKKIPRWSTRWVCLQ). The helical transmembrane segment at 442-462 (VFSLGCLVVSIAAAAGSIAGV) threads the bilayer. At 463–476 (LLDLKSYKPFRSEY) the chain is on the extracellular side.

Belongs to the amino acid/polyamine transporter 2 family. Amino acid/auxin permease (AAAP) (TC 2.A.18.2) subfamily. In terms of tissue distribution, expressed in the root phloem. Detected in stamens, in cotyledons, and in major veins of mature leaves.

Its subcellular location is the cell membrane. The protein localises to the nucleus membrane. It localises to the endomembrane system. Its activity is regulated as follows. Inhibited by carbonylcyanide m-chlorophenylhydrazone and 2,4-dinitrophenol. In terms of biological role, amino acid-proton symporter. Stereospecific transporter with a broad specificity for GABA, tryptophan and both neutral and basic amino acids. High affinity transport of cationic amino acids. In Arabidopsis thaliana (Mouse-ear cress), this protein is Amino acid permease 3 (AAP3).